The sequence spans 545 residues: Esterase-5C (545 aa).

Residues M1 to A19 form the signal peptide. C84 and C103 form a disulfide bridge. N-linked (GlcNAc...) asparagine glycosylation occurs at N113. S207 serves as the catalytic Acyl-ester intermediate. A disulfide bridge connects residues C259 and C271. An N-linked (GlcNAc...) asparagine glycan is attached at N421. Catalysis depends on H467, which acts as the Charge relay system. N-linked (GlcNAc...) asparagine glycosylation is present at N507. C515 and C536 are oxidised to a cystine.

Belongs to the type-B carboxylesterase/lipase family.

It localises to the secreted. It catalyses the reaction a carboxylic ester + H2O = an alcohol + a carboxylate + H(+). In Drosophila pseudoobscura pseudoobscura (Fruit fly), this protein is Esterase-5C (Est-5C).